We begin with the raw amino-acid sequence, 231 residues long: Non-fluorescent flavoprotein (231 aa).

Belongs to the bacterial luciferase oxidoreductase family. Homodimer. The cofactor is FMN.

In Photobacterium phosphoreum, this protein is Non-fluorescent flavoprotein (luxF).